Reading from the N-terminus, the 73-residue chain is Translation initiation factor IF-1 (73 aa).

An S1-like domain is found at 1–73 (MAKKDGVIEI…TRGRIVYRYK (73 aa)).

The protein belongs to the IF-1 family. Component of the 30S ribosomal translation pre-initiation complex which assembles on the 30S ribosome in the order IF-2 and IF-3, IF-1 and N-formylmethionyl-tRNA(fMet); mRNA recruitment can occur at any time during PIC assembly.

It is found in the cytoplasm. In terms of biological role, one of the essential components for the initiation of protein synthesis. Stabilizes the binding of IF-2 and IF-3 on the 30S subunit to which N-formylmethionyl-tRNA(fMet) subsequently binds. Helps modulate mRNA selection, yielding the 30S pre-initiation complex (PIC). Upon addition of the 50S ribosomal subunit IF-1, IF-2 and IF-3 are released leaving the mature 70S translation initiation complex. In Leifsonia xyli subsp. xyli (strain CTCB07), this protein is Translation initiation factor IF-1.